We begin with the raw amino-acid sequence, 162 residues long: NADH-quinone oxidoreductase subunit I (162 aa).

4Fe-4S ferredoxin-type domains are found at residues 53 to 83 (QRRYANGEERCIACKLCEAVCPAMAISIESE) and 93 to 122 (SRYDIDLTKCIFCGFCEEACPVDAIVETHI). [4Fe-4S] cluster contacts are provided by Cys63, Cys66, Cys69, Cys73, Cys102, Cys105, Cys108, and Cys112.

Belongs to the complex I 23 kDa subunit family. As to quaternary structure, NDH-1 is composed of 14 different subunits. Subunits NuoA, H, J, K, L, M, N constitute the membrane sector of the complex. The cofactor is [4Fe-4S] cluster.

The protein localises to the cell inner membrane. It catalyses the reaction a quinone + NADH + 5 H(+)(in) = a quinol + NAD(+) + 4 H(+)(out). Functionally, NDH-1 shuttles electrons from NADH, via FMN and iron-sulfur (Fe-S) centers, to quinones in the respiratory chain. The immediate electron acceptor for the enzyme in this species is believed to be ubiquinone. Couples the redox reaction to proton translocation (for every two electrons transferred, four hydrogen ions are translocated across the cytoplasmic membrane), and thus conserves the redox energy in a proton gradient. The sequence is that of NADH-quinone oxidoreductase subunit I from Chromobacterium violaceum (strain ATCC 12472 / DSM 30191 / JCM 1249 / CCUG 213 / NBRC 12614 / NCIMB 9131 / NCTC 9757 / MK).